Consider the following 823-residue polypeptide: Protein phosphatase 1 regulatory subunit 29 (823 aa).

Positions 1–22 (MLRLGLCAAALLCVCQPGAVRA) are cleaved as a signal peptide. The Extracellular portion of the chain corresponds to 23-397 (DCWLIEGDKG…APSTSTTTHY (375 aa)). N-linked (GlcNAc...) asparagine glycosylation occurs at asparagine 54. LRR repeat units follow at residues 56-77 (TVHD…SLNR), 80-101 (NLTD…AFLG), 104-125 (SLQV…MLRG), 128-149 (RLQF…AFSE), and 152-173 (SLIS…TFAS). Asparagine 80, asparagine 85, and asparagine 117 each carry an N-linked (GlcNAc...) asparagine glycan. Positions 185 to 247 (NPFNCECDLF…ITVLQAKCRN (63 aa)) constitute an LRRCT domain. N-linked (GlcNAc...) asparagine glycans are attached at residues asparagine 205 and asparagine 247. A disordered region spans residues 249–294 (SMPARPVSHPTPYSTDAQREPDENSGFNPDEILSVEPPASSTTDAS). A Fibronectin type-III domain is found at 292–379 (DASAGPAIKL…FNHTCLTFTT (88 aa)). The helical transmembrane segment at 398-418 (IMTILGCLFGMVIVLGAVYYC) threads the bilayer. Residues 419–823 (LRKRRMQEEK…WKGVSAQQKL (405 aa)) lie on the Cytoplasmic side of the membrane. The interval 590–624 (ASSAATPGALERPSFLSPPYKESSHHPLQRQLSAD) is disordered. Phosphoserine occurs at positions 622, 671, and 675.

In terms of assembly, interacts with PPP1CA.

The protein localises to the membrane. Inhibits phosphatase activity of protein phosphatase 1 (PP1) complexes. This is Protein phosphatase 1 regulatory subunit 29 (Elfn2) from Mus musculus (Mouse).